Here is a 162-residue protein sequence, read N- to C-terminus: Transcription elongation factor GreA (162 aa).

A coiled-coil region spans residues 45–74 (ENAEYEAAREKQAFIEGRIKELEDMTARAE).

It belongs to the GreA/GreB family.

Functionally, necessary for efficient RNA polymerase transcription elongation past template-encoded arresting sites. The arresting sites in DNA have the property of trapping a certain fraction of elongating RNA polymerases that pass through, resulting in locked ternary complexes. Cleavage of the nascent transcript by cleavage factors such as GreA or GreB allows the resumption of elongation from the new 3'terminus. GreA releases sequences of 2 to 3 nucleotides. In Rickettsia felis (strain ATCC VR-1525 / URRWXCal2) (Rickettsia azadi), this protein is Transcription elongation factor GreA.